Here is a 619-residue protein sequence, read N- to C-terminus: Sodium-coupled monocarboxylate transporter 2 (619 aa).

Residues 1-9 (MRVKNFEAW) lie on the Extracellular side of the membrane. The helical transmembrane segment at 10–30 (DYVVFAGLFVISSGIGVFFAI) threads the bilayer. The Cytoplasmic portion of the chain corresponds to 31-47 (KERKKTTSREFLVGGRQ). A helical transmembrane segment spans residues 48–68 (MSFGPVALSLTASFMSAVTVL). At 69 to 80 (GTPAEVYRFGAS) the chain is on the extracellular side. Residues 81 to 101 (FFLFLISYVFVVFFTSELFLP) traverse the membrane as a helical segment. Over 102 to 128 (VFYRSGITSTYEYLQLRFNKPVRYAAT) the chain is Cytoplasmic. The chain crosses the membrane as a helical span at residues 129-149 (IIYIVQTILYTGVVVYAPALA). Residues 150–157 (LNQVTGFN) lie on the Extracellular side of the membrane. A helical membrane pass occupies residues 158–178 (LWASVFATGIVCTFYCSLGGL). At 179–180 (KA) the chain is on the cytoplasmic side. The helical transmembrane segment at 181–201 (VVWTDAFQMVVMIVGFLTVLI) threads the bilayer. Topologically, residues 202–235 (QGSNHVGGFNNVLEKAGNGSRLHIVDFDVDPLRR) are extracellular. The N-linked (GlcNAc...) asparagine glycan is linked to N219. A helical membrane pass occupies residues 236–256 (HTFWTITIGGTFTWLGVYGVN). The Cytoplasmic portion of the chain corresponds to 257 to 275 (QSTIQRCISCKTEKHAKLA). A helical membrane pass occupies residues 276–296 (LYFNLLGLWIIVACAVFSGLI). The Extracellular portion of the chain corresponds to 297–321 (MYSHFKDCDPWTSGVISAPDQLMPY). The chain crosses the membrane as a helical span at residues 322–342 (FVMEIFATMPGLPGLFVACAF). Residues 343-385 (SGTLSTVAASINALATVTFEDFVKSCFPHLSDKLSTWISKGLC) lie on the Cytoplasmic side of the membrane. Residues 386–406 (ILFGIMCTSMAVVASLMGSVV) traverse the membrane as a helical segment. At 407 to 411 (QAALS) the chain is on the extracellular side. Residues 412 to 432 (IHGMCGGPMLGLFTLGLVFPF) traverse the membrane as a helical segment. Residues 433–437 (VNWKG) lie on the Cytoplasmic side of the membrane. Residues 438 to 458 (ALGGLLTGITLSFWVAIGSFI) form a helical membrane-spanning segment. Residues 459-504 (YPAPESKTLPLPLSTEHCVELNITTTVAPQISSRPVLADTWYSLSY) are Extracellular-facing. The N-linked (GlcNAc...) asparagine glycan is linked to N480. A helical membrane pass occupies residues 505–525 (LYFSAVGCLGCIAAGIIISFL). Residues 526 to 619 (TGKQRGKDID…NSVPEKTTYF (94 aa)) lie on the Cytoplasmic side of the membrane.

It belongs to the sodium:solute symporter (SSF) (TC 2.A.21) family. Expressed in the cortical region of the kidney corresponding to the proximal tubule. Expressed in Mueller cells of the inner retina (at protein level). Isoform 1 is expressed in the retina, kidney, small intestine and skeletal muscle. Isoform 2 is not detected in the kidney, small intestine and skeletal muscle. In the kidney, expressed predominantly in tubular epithelial cells of the cortical region and in the convoluted portions of the proximal tubule (pars convoluta). In the small intestine, its expression is highest in the proximal part and gradually decreased towards the distal end. Expressed in the neural retina. Not detected in the caecum and colon.

The protein localises to the apical cell membrane. It catalyses the reaction (S)-lactate(out) + Na(+)(out) = (S)-lactate(in) + Na(+)(in). The catalysed reaction is nicotinate(out) + Na(+)(out) = nicotinate(in) + Na(+)(in). It carries out the reaction pyruvate(out) + Na(+)(out) = pyruvate(in) + Na(+)(in). The enzyme catalyses propanoate(out) + Na(+)(out) = propanoate(in) + Na(+)(in). It catalyses the reaction butanoate(out) + Na(+)(out) = butanoate(in) + Na(+)(in). The catalysed reaction is acetoacetate(out) + Na(+)(out) = acetoacetate(in) + Na(+)(in). Acts as an electroneutral and low-affinity sodium (Na(+))-dependent sodium-coupled solute transporter. Catalyzes the transport across the plasma membrane of many monocarboxylates such as lactate, pyruvate, nicotinate, propionate, butyrate and beta-D-hydroxybutyrate. May be responsible for the first step of reabsorption of monocarboxylates from the lumen of the proximal tubule of the kidney and the small intestine. May play also a role in monocarboxylates transport in the retina. Mediates electroneutral uptake of lactate, with a stoichiometry of 2 Na(+) for each lactate. The chain is Sodium-coupled monocarboxylate transporter 2 (Slc5a12) from Mus musculus (Mouse).